We begin with the raw amino-acid sequence, 652 residues long: Probable export ATP-binding/permease protein PFL_2149 (652 aa).

Positions 6–244 (LHLTGISRSF…APSEPPVSVR (239 aa)) constitute an ABC transporter domain. 42 to 49 (GASGSGKS) contributes to the ATP binding site. Transmembrane regions (helical) follow at residues 251–271 (LVAS…ALVS), 277–297 (LLTM…VAIG), 525–545 (LALL…IGVM), 586–606 (IGGA…TLFI), and 615–635 (MGSI…FGFV).

Belongs to the ABC transporter superfamily. Macrolide exporter (TC 3.A.1.122) family. As to quaternary structure, probably part of a tripartite efflux system, which is composed of an inner membrane transporter, a periplasmic membrane fusion protein, and an outer membrane component.

The protein localises to the cell inner membrane. In terms of biological role, probably part of a tripartite efflux system. This chain is Probable export ATP-binding/permease protein PFL_2149, found in Pseudomonas fluorescens (strain ATCC BAA-477 / NRRL B-23932 / Pf-5).